Here is a 217-residue protein sequence, read N- to C-terminus: Ribosomal RNA large subunit methyltransferase E (217 aa).

Glycine 64, tryptophan 66, aspartate 92, aspartate 108, and aspartate 133 together coordinate S-adenosyl-L-methionine. Lysine 173 (proton acceptor) is an active-site residue.

The protein belongs to the class I-like SAM-binding methyltransferase superfamily. RNA methyltransferase RlmE family.

The protein resides in the cytoplasm. The catalysed reaction is uridine(2552) in 23S rRNA + S-adenosyl-L-methionine = 2'-O-methyluridine(2552) in 23S rRNA + S-adenosyl-L-homocysteine + H(+). Functionally, specifically methylates the uridine in position 2552 of 23S rRNA at the 2'-O position of the ribose in the fully assembled 50S ribosomal subunit. The chain is Ribosomal RNA large subunit methyltransferase E from Delftia acidovorans (strain DSM 14801 / SPH-1).